Consider the following 314-residue polypeptide: Homoserine kinase (314 aa).

Residue 97 to 107 participates in ATP binding; sequence PPARGMGSSAT.

The protein belongs to the GHMP kinase family. Homoserine kinase subfamily.

The protein resides in the cytoplasm. It carries out the reaction L-homoserine + ATP = O-phospho-L-homoserine + ADP + H(+). The protein operates within amino-acid biosynthesis; L-threonine biosynthesis; L-threonine from L-aspartate: step 4/5. Functionally, catalyzes the ATP-dependent phosphorylation of L-homoserine to L-homoserine phosphate. The protein is Homoserine kinase of Synechococcus sp. (strain RCC307).